A 188-amino-acid polypeptide reads, in one-letter code: MALEKIIEKLENEKKVKIEELRKKREKEYEDFVAKKEKELEEWKEQQRKNLKESLNREESTLLSQLRLKYNTEKARIEAETVNRVKLLLLEKIKSLSNELYNGIWDGFVEKESVKGGEIILAKGEDKIDVDHFCKKYGLVLGKDRVEGKGGFVIQKDNLVIDLTIDTIVEELVNKNILEIAQILRGEK.

It belongs to the V-ATPase E subunit family.

Its function is as follows. Produces ATP from ADP in the presence of a proton gradient across the membrane. The polypeptide is V-type proton ATPase subunit E (Dictyoglomus turgidum (strain DSM 6724 / Z-1310)).